The following is a 479-amino-acid chain: F-box protein SKIP17 (479 aa).

The F-box domain maps to 92 to 138 (NSNSWSLPPELTIKVFSMLDTKSMMQAAVCCTMFNKCAMDRLCYSHI). A disordered region spans residues 435–479 (EMMEAEDDEVDEEDDSDDDTDDVSDEDESENDDDMGMGFDVDYLL). Over residues 437–469 (MEAEDDEVDEEDDSDDDTDDVSDEDESENDDDM) the composition is skewed to acidic residues.

Part of a SCF (ASK-cullin-F-box) protein ligase complex. Interacts with SPK1B/ASK2.

It is found in the nucleus. Its pathway is protein modification; protein ubiquitination. Functionally, component of SCF(ASK-cullin-F-box) E3 ubiquitin ligase complexes, which may mediate the ubiquitination and subsequent proteasomal degradation of target proteins. The chain is F-box protein SKIP17 (SKIP17) from Arabidopsis thaliana (Mouse-ear cress).